The primary structure comprises 116 residues: Flagellar transcriptional regulator FlhD (116 aa).

It belongs to the FlhD family. In terms of assembly, homodimer; disulfide-linked. Forms a heterohexamer composed of two FlhC and four FlhD subunits. Each FlhC binds a FlhD dimer, forming a heterotrimer, and a hexamer assembles by dimerization of two heterotrimers.

It is found in the cytoplasm. Its function is as follows. Functions in complex with FlhC as a master transcriptional regulator that regulates transcription of several flagellar and non-flagellar operons by binding to their promoter region. Activates expression of class 2 flagellar genes, including fliA, which is a flagellum-specific sigma factor that turns on the class 3 genes. Also regulates genes whose products function in a variety of physiological pathways. The protein is Flagellar transcriptional regulator FlhD of Proteus mirabilis (strain HI4320).